The primary structure comprises 183 residues: Hypoxanthine/guanine phosphoribosyltransferase (183 aa).

This sequence belongs to the purine/pyrimidine phosphoribosyltransferase family. Archaeal HPRT subfamily. As to quaternary structure, homodimer.

It localises to the cytoplasm. It catalyses the reaction IMP + diphosphate = hypoxanthine + 5-phospho-alpha-D-ribose 1-diphosphate. It carries out the reaction GMP + diphosphate = guanine + 5-phospho-alpha-D-ribose 1-diphosphate. Its pathway is purine metabolism; IMP biosynthesis via salvage pathway; IMP from hypoxanthine: step 1/1. Its function is as follows. Catalyzes a salvage reaction resulting in the formation of IMP that is energically less costly than de novo synthesis. This is Hypoxanthine/guanine phosphoribosyltransferase from Methanocaldococcus jannaschii (strain ATCC 43067 / DSM 2661 / JAL-1 / JCM 10045 / NBRC 100440) (Methanococcus jannaschii).